The sequence spans 127 residues: Large ribosomal subunit protein bL12 (127 aa).

It belongs to the bacterial ribosomal protein bL12 family. In terms of assembly, homodimer. Part of the ribosomal stalk of the 50S ribosomal subunit. Forms a multimeric L10(L12)X complex, where L10 forms an elongated spine to which 2 to 4 L12 dimers bind in a sequential fashion. Binds GTP-bound translation factors.

Functionally, forms part of the ribosomal stalk which helps the ribosome interact with GTP-bound translation factors. Is thus essential for accurate translation. This is Large ribosomal subunit protein bL12 from Nitratiruptor sp. (strain SB155-2).